Here is a 241-residue protein sequence, read N- to C-terminus: Phosphoadenosine 5'-phosphosulfate reductase (241 aa).

Cys235 functions as the Nucleophile; cysteine thiosulfonate intermediate in the catalytic mechanism.

It belongs to the PAPS reductase family. CysH subfamily.

The protein resides in the cytoplasm. The enzyme catalyses [thioredoxin]-disulfide + sulfite + adenosine 3',5'-bisphosphate + 2 H(+) = [thioredoxin]-dithiol + 3'-phosphoadenylyl sulfate. It participates in sulfur metabolism; hydrogen sulfide biosynthesis; sulfite from sulfate: step 3/3. In terms of biological role, catalyzes the formation of sulfite from phosphoadenosine 5'-phosphosulfate (PAPS) using thioredoxin as an electron donor. The protein is Phosphoadenosine 5'-phosphosulfate reductase of Xanthomonas oryzae pv. oryzae (strain MAFF 311018).